A 292-amino-acid polypeptide reads, in one-letter code: Glutathione S-transferase L2, chloroplastic (292 aa).

The transit peptide at 1–56 (MSVGLKVSAFLHPTLALSSRDVSLSSSSSSLYLDRKILRPGSGRRWCKSRRTEPIL) directs the protein to the chloroplast. In terms of domain architecture, GST N-terminal spans 79–160 (GSTRLYISYT…YIDTNFEGPS (82 aa)). Glutathione is bound by residues 89–90 (CP), 117–118 (NR), 131–132 (KV), and 144–145 (ES). One can recognise a GST C-terminal domain in the interval 130–286 (NKVPALEHNN…ELVERYKRRV (157 aa)).

This sequence belongs to the GST superfamily. Lambda family.

It localises to the plastid. Its subcellular location is the chloroplast. The catalysed reaction is RX + glutathione = an S-substituted glutathione + a halide anion + H(+). In terms of biological role, catalyzes the glutathione-dependent reduction of S-glutathionylquercetin to quercetin. In vitro, possesses glutathione-dependent thiol transferase activity toward 2-hydroxyethyl disulfide (HED). In Arabidopsis thaliana (Mouse-ear cress), this protein is Glutathione S-transferase L2, chloroplastic (GSTL2).